Consider the following 753-residue polypeptide: Translation initiation factor IF-2 (753 aa).

A disordered region spans residues 1–166 (MSEKPRRDTG…PVMRPRGPVA (166 aa)). Composition is skewed to low complexity over residues 19–43 (STGQ…ATGA), 71–81 (NARPAAPANAR), and 102–122 (TPAP…TNTR). Residues 133 to 146 (PQPEEREREREAVL) show a composition bias toward basic and acidic residues. Over residues 153–162 (TTTRPVMRPR) the composition is skewed to low complexity. The region spanning 249 to 418 (PRPPVVTIMG…LLVADLEDLR (170 aa)) is the tr-type G domain. Residues 258-265 (GHVDHGKT) form a G1 region. GTP is bound at residue 258–265 (GHVDHGKT). The G2 stretch occupies residues 283 to 287 (GITQH). The tract at residues 304–307 (DTPG) is G3. GTP is bound by residues 304–308 (DTPGH) and 358–361 (NKID). The interval 358–361 (NKID) is G4. Residues 394-396 (SAR) are G5.

It belongs to the TRAFAC class translation factor GTPase superfamily. Classic translation factor GTPase family. IF-2 subfamily.

Its subcellular location is the cytoplasm. In terms of biological role, one of the essential components for the initiation of protein synthesis. Protects formylmethionyl-tRNA from spontaneous hydrolysis and promotes its binding to the 30S ribosomal subunits. Also involved in the hydrolysis of GTP during the formation of the 70S ribosomal complex. The polypeptide is Translation initiation factor IF-2 (Chloroflexus aggregans (strain MD-66 / DSM 9485)).